Consider the following 358-residue polypeptide: Sesquiterpene synthase Agr3 (358 aa).

Mg(2+)-binding residues include D99, N246, S250, and E254. A DDXXD motif motif is present at residues 99 to 103 (DNISD). R334 and Y335 together coordinate (2E,6E)-farnesyl diphosphate.

The protein belongs to the terpene synthase family. Requires Mg(2+) as cofactor.

The catalysed reaction is (2E,6E)-farnesyl diphosphate = alpha-muurolene + diphosphate. The enzyme catalyses (2E,6E)-farnesyl diphosphate = gamma-muurolene + diphosphate. It carries out the reaction (2E,6E)-farnesyl diphosphate = delta-cadinene + diphosphate. Terpene cyclase that catalyzes the cyclization of farnesyl diphosphate (FPP) to various sesquiterpenes, including alpha-muurolene, gamma-muurolene, germacrene, delta-cadinene, delta-cadinol and cubenol. This chain is Sesquiterpene synthase Agr3, found in Cyclocybe aegerita (Black poplar mushroom).